The sequence spans 201 residues: Cytochrome c oxidase assembly protein CtaG (201 aa).

Topologically, residues 1 to 13 (MTDQGENEKKQRR) are cytoplasmic. Residues 14-36 (SNATIAVACLSFFVCMIGAAYAS) traverse the membrane as a helical; Signal-anchor for type II membrane protein segment. Residues 37-201 (VPLYRIFCQV…KAVGSTRNGG (165 aa)) are Periplasmic-facing.

It belongs to the COX11/CtaG family.

It is found in the cell inner membrane. Exerts its effect at some terminal stage of cytochrome c oxidase synthesis, probably by being involved in the insertion of the copper B into subunit I. The chain is Cytochrome c oxidase assembly protein CtaG from Brucella ovis (strain ATCC 25840 / 63/290 / NCTC 10512).